A 268-amino-acid polypeptide reads, in one-letter code: Urease accessory protein UreD (268 aa).

Belongs to the UreD family. UreD, UreF and UreG form a complex that acts as a GTP-hydrolysis-dependent molecular chaperone, activating the urease apoprotein by helping to assemble the nickel containing metallocenter of UreC. The UreE protein probably delivers the nickel.

It localises to the cytoplasm. Required for maturation of urease via the functional incorporation of the urease nickel metallocenter. The sequence is that of Urease accessory protein UreD from Lysinibacillus sphaericus (strain C3-41).